The primary structure comprises 209 residues: MIAIIDYGMGNIRSVEQALKHIGAAYIVTSDKEEIFRSDGVILPGVGAFPKAMDVLEEKDLVRVLQEIGRSRKPLLGICLGMQLLFEKSEELQDCNGLSLLPGVIRKLKVPYKIPHMGWNELKKEGEIALWNGVEDGSFVYYVHSYYADCPNEIVYGISEYGVKVPGFVAKGNIYGAQFHPEKSGDIGMQMLKNFKGVVETWKSSQLSI.

A Glutamine amidotransferase type-1 domain is found at 1–205; that stretch reads MIAIIDYGMG…KGVVETWKSS (205 aa). Residue Cys-79 is the Nucleophile of the active site. Active-site residues include His-180 and Glu-182.

Heterodimer of HisH and HisF.

It localises to the cytoplasm. It carries out the reaction 5-[(5-phospho-1-deoxy-D-ribulos-1-ylimino)methylamino]-1-(5-phospho-beta-D-ribosyl)imidazole-4-carboxamide + L-glutamine = D-erythro-1-(imidazol-4-yl)glycerol 3-phosphate + 5-amino-1-(5-phospho-beta-D-ribosyl)imidazole-4-carboxamide + L-glutamate + H(+). It catalyses the reaction L-glutamine + H2O = L-glutamate + NH4(+). It functions in the pathway amino-acid biosynthesis; L-histidine biosynthesis; L-histidine from 5-phospho-alpha-D-ribose 1-diphosphate: step 5/9. In terms of biological role, IGPS catalyzes the conversion of PRFAR and glutamine to IGP, AICAR and glutamate. The HisH subunit catalyzes the hydrolysis of glutamine to glutamate and ammonia as part of the synthesis of IGP and AICAR. The resulting ammonia molecule is channeled to the active site of HisF. This is Imidazole glycerol phosphate synthase subunit HisH from Bacillus cereus (strain AH187).